A 118-amino-acid chain; its full sequence is Large ribosomal subunit protein bL20 (118 aa).

It belongs to the bacterial ribosomal protein bL20 family.

In terms of biological role, binds directly to 23S ribosomal RNA and is necessary for the in vitro assembly process of the 50S ribosomal subunit. It is not involved in the protein synthesizing functions of that subunit. This is Large ribosomal subunit protein bL20 from Syntrophotalea carbinolica (strain DSM 2380 / NBRC 103641 / GraBd1) (Pelobacter carbinolicus).